The primary structure comprises 360 residues: Phospho-N-acetylmuramoyl-pentapeptide-transferase (360 aa).

The next 10 membrane-spanning stretches (helical) occupy residues 18–38 (VFSYLTFRAIISTLTALFISL), 73–93 (TMGGLLILASIVISVLLWADL), 94–114 (SNIYVWVVLFVIVSFGIVGFV), 134–154 (YFWQTVIGLSTALFLYFIAQG), 168–188 (LLPQLGIFYVVMSYFVIVGTS), 199–219 (GLAIVPTIMVAGAFALFAYVT), 239–259 (LVIVCTAIVGAGLGFLWFNTY), 263–283 (VFMGDVGSLALGAALGVIAIL), 288–308 (LVLFIMGGVFVMETVSVILQV), and 338–358 (VIVRFWIISLILVLIGLATLK).

The protein belongs to the glycosyltransferase 4 family. MraY subfamily. It depends on Mg(2+) as a cofactor.

The protein localises to the cell inner membrane. It catalyses the reaction UDP-N-acetyl-alpha-D-muramoyl-L-alanyl-gamma-D-glutamyl-meso-2,6-diaminopimeloyl-D-alanyl-D-alanine + di-trans,octa-cis-undecaprenyl phosphate = di-trans,octa-cis-undecaprenyl diphospho-N-acetyl-alpha-D-muramoyl-L-alanyl-D-glutamyl-meso-2,6-diaminopimeloyl-D-alanyl-D-alanine + UMP. It participates in cell wall biogenesis; peptidoglycan biosynthesis. Its function is as follows. Catalyzes the initial step of the lipid cycle reactions in the biosynthesis of the cell wall peptidoglycan: transfers peptidoglycan precursor phospho-MurNAc-pentapeptide from UDP-MurNAc-pentapeptide onto the lipid carrier undecaprenyl phosphate, yielding undecaprenyl-pyrophosphoryl-MurNAc-pentapeptide, known as lipid I. This is Phospho-N-acetylmuramoyl-pentapeptide-transferase from Colwellia psychrerythraea (strain 34H / ATCC BAA-681) (Vibrio psychroerythus).